The following is a 199-amino-acid chain: Peptidyl-tRNA hydrolase (199 aa).

Position 18 (Tyr-18) interacts with tRNA. His-23 serves as the catalytic Proton acceptor. Tyr-72, Asn-74, and Asn-120 together coordinate tRNA.

Belongs to the PTH family. Monomer.

The protein resides in the cytoplasm. It catalyses the reaction an N-acyl-L-alpha-aminoacyl-tRNA + H2O = an N-acyl-L-amino acid + a tRNA + H(+). Functionally, hydrolyzes ribosome-free peptidyl-tRNAs (with 1 or more amino acids incorporated), which drop off the ribosome during protein synthesis, or as a result of ribosome stalling. Its function is as follows. Catalyzes the release of premature peptidyl moieties from peptidyl-tRNA molecules trapped in stalled 50S ribosomal subunits, and thus maintains levels of free tRNAs and 50S ribosomes. The sequence is that of Peptidyl-tRNA hydrolase from Bifidobacterium adolescentis (strain ATCC 15703 / DSM 20083 / NCTC 11814 / E194a).